The primary structure comprises 217 residues: Outer-membrane lipoprotein LolB (217 aa).

The first 20 residues, 1 to 20 (MSKTVRTLALGGLVLAGLSA), serve as a signal peptide directing secretion. Cys-21 carries the N-palmitoyl cysteine lipid modification. A lipid anchor (S-diacylglycerol cysteine) is attached at Cys-21. Positions 105-124 (DTTSGAGRLEGLEGGPRSGP) are disordered.

This sequence belongs to the LolB family. As to quaternary structure, monomer.

It is found in the cell outer membrane. In terms of biological role, plays a critical role in the incorporation of lipoproteins in the outer membrane after they are released by the LolA protein. This Xanthomonas axonopodis pv. citri (strain 306) protein is Outer-membrane lipoprotein LolB.